The sequence spans 324 residues: Phospho-N-acetylmuramoyl-pentapeptide-transferase (324 aa).

10 helical membrane-spanning segments follow: residues 9–29 (TFAVAFIITVIGVPLFIPFLV), 53–73 (TMGAVVFITAMLISFLVFSFI), 77–97 (VSAATWLLFIALALFGALGFL), 117–137 (FLGQVVISILFYLVYHFNDFA), 147–167 (IEVDLGWFFVIFILFWLVGFS), 176–196 (LDGLVSGLSVIAFSAFGVIAF), 201–221 (MDVAIFCFAIVGGMLGFLLFN), 227–247 (IFMGDTGSLALGGSIAAISIL), 253–273 (LLLLIGIIFVIETASVILQVF), and 304–324 (VLTFWGIGLVGAIISVCVVIF).

The protein belongs to the glycosyltransferase 4 family. MraY subfamily. The cofactor is Mg(2+).

The protein localises to the cell membrane. It catalyses the reaction UDP-N-acetyl-alpha-D-muramoyl-L-alanyl-gamma-D-glutamyl-meso-2,6-diaminopimeloyl-D-alanyl-D-alanine + di-trans,octa-cis-undecaprenyl phosphate = di-trans,octa-cis-undecaprenyl diphospho-N-acetyl-alpha-D-muramoyl-L-alanyl-D-glutamyl-meso-2,6-diaminopimeloyl-D-alanyl-D-alanine + UMP. Its pathway is cell wall biogenesis; peptidoglycan biosynthesis. Its function is as follows. Catalyzes the initial step of the lipid cycle reactions in the biosynthesis of the cell wall peptidoglycan: transfers peptidoglycan precursor phospho-MurNAc-pentapeptide from UDP-MurNAc-pentapeptide onto the lipid carrier undecaprenyl phosphate, yielding undecaprenyl-pyrophosphoryl-MurNAc-pentapeptide, known as lipid I. The protein is Phospho-N-acetylmuramoyl-pentapeptide-transferase of Listeria monocytogenes serovar 1/2a (strain ATCC BAA-679 / EGD-e).